We begin with the raw amino-acid sequence, 397 residues long: Kappa-carrageenase (397 aa).

The signal sequence occupies residues 1-25 (MKPISIVAFPIPAISMLLLSAVSQA). In terms of domain architecture, GH16 spans 26–299 (ASMQPPIAKP…YVRTWVKVGN (274 aa)). Cys-98 and Cys-268 form a disulfide bridge. The Nucleophile role is filled by Glu-163. Asp-165 is an active-site residue. Glu-168 serves as the catalytic Proton donor. A BIG2 domain is found at 316-387 (AVNSVQLSAA…TITVKTKNKG (72 aa)).

This sequence belongs to the glycosyl hydrolase 16 family.

The protein resides in the periplasm. It catalyses the reaction Endohydrolysis of (1-&gt;4)-beta-D-linkages between D-galactose 4-sulfate and 3,6-anhydro-D-galactose in kappa-carrageenans.. This is Kappa-carrageenase (cgkA) from Pseudoalteromonas carrageenovora (Alteromonas carrageenovora).